The primary structure comprises 131 residues: MAEPDYIEDDNPELIRPQKLINPVKTSRNHQDLHRELLMNQKRGLAPQNKPELQKVMEKRKRDQVIKQKEEEAQKKKSDLEIELLKRQQKLEQLELEKQKLQEEQENAPEFVKVKGNLRRTGQEVAQAQES.

Ala2 carries the N-acetylalanine modification. Disordered regions lie at residues 39–78 (MNQK…KKKS) and 100–131 (KLQE…AQES). Lys50 is modified (N6-acetyllysine). Basic and acidic residues predominate over residues 52 to 78 (ELQKVMEKRKRDQVIKQKEEEAQKKKS). A coiled-coil region spans residues 61–112 (KRDQVIKQKEEEAQKKKSDLEIELLKRQQKLEQLELEKQKLQEEQENAPEFV).

The protein belongs to the FAM107 family.

This chain is Protein FAM107B, found in Homo sapiens (Human).